Reading from the N-terminus, the 284-residue chain is Efem/EfeO family lipoprotein (284 aa).

A signal peptide spans 1-17 (MKKLTTLLLASTLLIAA). C18 carries the N-palmitoyl cysteine lipid modification. A lipid anchor (S-diacylglycerol cysteine) is attached at C18.

The protein belongs to the EfeM/EfeO family.

It is found in the cell membrane. In Staphylococcus aureus (strain USA300), this protein is Efem/EfeO family lipoprotein.